A 135-amino-acid polypeptide reads, in one-letter code: Phosphomevalonate dehydratase small subunit (135 aa).

S67 functions as the Proton acceptor in the catalytic mechanism.

This sequence belongs to the AcnX type II small subunit family. In terms of assembly, heterodimer composed of a large subunit (PMDh-L) and a small subunit (PMDh-S).

It carries out the reaction (R)-5-phosphomevalonate = (2E)-3-methyl-5-phosphooxypent-2-enoate + H2O. The protein operates within isoprenoid biosynthesis; isopentenyl diphosphate biosynthesis via mevalonate pathway. In terms of biological role, component of a hydro-lyase that catalyzes the dehydration of mevalonate 5-phosphate (MVA5P) to form trans-anhydromevalonate 5-phosphate (tAHMP). Involved in the archaeal mevalonate (MVA) pathway, which provides fundamental precursors for isoprenoid biosynthesis, such as isopentenyl diphosphate (IPP) and dimethylallyl diphosphate (DMAPP). This Methanopyrus kandleri (strain AV19 / DSM 6324 / JCM 9639 / NBRC 100938) protein is Phosphomevalonate dehydratase small subunit.